The chain runs to 149 residues: Large ribosomal subunit protein bL9 (149 aa).

The protein belongs to the bacterial ribosomal protein bL9 family.

In terms of biological role, binds to the 23S rRNA. This is Large ribosomal subunit protein bL9 from Fervidobacterium nodosum (strain ATCC 35602 / DSM 5306 / Rt17-B1).